Here is a 947-residue protein sequence, read N- to C-terminus: Bifunctional glutamine synthetase adenylyltransferase/adenylyl-removing enzyme (947 aa).

The segment at 1 to 440 (MTPLSSPLSQ…VFNELIGDDE (440 aa)) is adenylyl removase. The segment at 450-947 (SEPWREVWQD…ASWRKWLVAV (498 aa)) is adenylyl transferase.

Belongs to the GlnE family. Requires Mg(2+) as cofactor.

It catalyses the reaction [glutamine synthetase]-O(4)-(5'-adenylyl)-L-tyrosine + phosphate = [glutamine synthetase]-L-tyrosine + ADP. It carries out the reaction [glutamine synthetase]-L-tyrosine + ATP = [glutamine synthetase]-O(4)-(5'-adenylyl)-L-tyrosine + diphosphate. Functionally, involved in the regulation of glutamine synthetase GlnA, a key enzyme in the process to assimilate ammonia. When cellular nitrogen levels are high, the C-terminal adenylyl transferase (AT) inactivates GlnA by covalent transfer of an adenylyl group from ATP to specific tyrosine residue of GlnA, thus reducing its activity. Conversely, when nitrogen levels are low, the N-terminal adenylyl removase (AR) activates GlnA by removing the adenylyl group by phosphorolysis, increasing its activity. The regulatory region of GlnE binds the signal transduction protein PII (GlnB) which indicates the nitrogen status of the cell. In Salmonella paratyphi C (strain RKS4594), this protein is Bifunctional glutamine synthetase adenylyltransferase/adenylyl-removing enzyme.